Here is a 496-residue protein sequence, read N- to C-terminus: Sodium/sialic acid symporter SiaT (496 aa).

Over 1 to 7 (MQLHDFG) the chain is Periplasmic. A helical membrane pass occupies residues 8 to 29 (FINYAVLFGYLAAMLLVGVYFS). The Cytoplasmic portion of the chain corresponds to 30-46 (KRQKTADDYFRGGGRVP). The helical transmembrane segment at 47-59 (GWAAGVSVFATTL) threads the bilayer. A56 contributes to the Na(+) binding site. T58 serves as a coordination point for N-acetyl-alpha-neuraminate. A Na(+)-binding site is contributed by L59. Residues S60, T63, and Q82 each coordinate N-acetyl-alpha-neuraminate. Residues 60–76 (SSITFMSIPAKAYTSDW) lie on the Periplasmic side of the membrane. Residues 77–92 (TFIIGQYLAIAILPLV) form a helical membrane-spanning segment. At 93-116 (FYFYIPFFRKLKITSAYEYLEARF) the chain is on the cytoplasmic side. Residues 117–144 (DVRSRLFASLSFMLFHIGRVAIITYLTV) traverse the membrane as a helical segment. N-acetyl-alpha-neuraminate is bound at residue R135. Over 145–154 (LALRPFMGID) the chain is Periplasmic. A helical transmembrane segment spans residues 155 to 172 (PVVLIVLISLLCIIYTWM). Over 173 to 174 (GG) the chain is Cytoplasmic. A helical transmembrane segment spans residues 175-199 (IEGVIWTDVIQGLLLSGGAVLIFIM). D182 lines the Na(+) pocket. Topologically, residues 200–235 (ICFKVDGGISEIFTTTAQADKFFPTTQWRWSWTDST) are periplasmic. The chain crosses the membrane as a helical span at residues 236–252 (IPVLMIGFLFANIQQFT). The Cytoplasmic portion of the chain corresponds to 253–272 (ASQDVVQRYIVTDSIKETKR). Residues 273–292 (TLITNAKLVAIIPIFFFAIG) form a helical membrane-spanning segment. The Periplasmic segment spans residues 293 to 325 (SALFVYYQQNPSLLPAGFNTGGILPLFIVTEMP). A helical transmembrane segment spans residues 326–356 (IGIAGLIIAAIFAAAQSSISSSLNSISSCFN). The Na(+) site is built by A339, S342, S343, S345, and S346. The Cytoplasmic segment spans residues 357-374 (SDIYTRLSKSSPSPEQKM). A helical transmembrane segment spans residues 375–396 (KVAKLVIIVAGIFSSLAAIWLV). Topologically, residues 397–403 (LSDEAEI) are periplasmic. Residues 404-427 (WDAFNSLIGLMGGPMTGLFMLGIF) form a helical membrane-spanning segment. Over 428 to 432 (VKRAN) the chain is Cytoplasmic. A helical transmembrane segment spans residues 433–453 (AGSAVVGIIVSIIAVLAARYG). Residues 454-457 (SDLN) lie on the Periplasmic side of the membrane. Residues 458-479 (FFFYGVIGSMSVVIAGTITAPL) form a helical membrane-spanning segment. Topologically, residues 480 to 496 (FAPAKQLSLDDSETSEN) are cytoplasmic.

It belongs to the sodium:solute symporter (SSF) (TC 2.A.21) family.

It localises to the cell inner membrane. It catalyses the reaction N-acetyl-alpha-neuraminate(out) + 2 Na(+)(out) = N-acetyl-alpha-neuraminate(in) + 2 Na(+)(in). With respect to regulation, both Na(+) sites regulate Neu5Ac transport. The binding energy of the second Na(+) ion may be used to allosterically stabilize the substrate without directly coordinating it. In the absence of external Na(+), the rate is reduced by 78%. In terms of biological role, symporter that uses the Na(+) gradient as the driving force for the uptake of the sialic acid N-acetylneuraminic acid (Neu5Ac). It allows the use of host-derived Neu5Ac as an energy source by P.mirabilis. Also binds N-glycolylneuraminic acid (Neu5Gc) and ketodeoxynonulosonic acid (KDN). Shows the highest affinity for Neu5Ac and Neu5Gc, which commonly occupy the terminal non-reducing position of mammalian cell surface glycoconjugates. The chain is Sodium/sialic acid symporter SiaT from Proteus mirabilis (strain HI4320).